We begin with the raw amino-acid sequence, 454 residues long: Cobyrinate a,c-diamide synthase (454 aa).

Positions 247-442 (KIGIAMDSAF…IHAHWASNPN (196 aa)) constitute a GATase cobBQ-type domain. Cys-329 functions as the Nucleophile in the catalytic mechanism.

This sequence belongs to the CobB/CbiA family. The cofactor is Mg(2+).

It catalyses the reaction cob(II)yrinate + 2 L-glutamine + 2 ATP + 2 H2O = cob(II)yrinate a,c diamide + 2 L-glutamate + 2 ADP + 2 phosphate + 2 H(+). The protein operates within cofactor biosynthesis; adenosylcobalamin biosynthesis; cob(II)yrinate a,c-diamide from sirohydrochlorin (anaerobic route): step 10/10. In terms of biological role, catalyzes the ATP-dependent amidation of the two carboxylate groups at positions a and c of cobyrinate, using either L-glutamine or ammonia as the nitrogen source. The protein is Cobyrinate a,c-diamide synthase of Leptospira interrogans serogroup Icterohaemorrhagiae serovar Lai (strain 56601).